We begin with the raw amino-acid sequence, 253 residues long: Pro-opiomelanocortin A (253 aa).

The N-terminal stretch at 1 to 21 (MLCPAWLLAVAVVGVVRGVKG) is a signal peptide. Q22 carries the pyrrolidone carboxylic acid modification. 2 disulfide bridges follow: C23–C45 and C29–C41. N-acetylserine; in Corticotropin is present on S104. V116 bears the Valine amide mark. Residues 228–253 (QKREQWGREEGEEKRALGERKYHFQG) are disordered. Glutamine amide; partial is present on Q252.

This sequence belongs to the POMC family. Post-translationally, specific enzymatic cleavages at paired basic residues yield the different active peptides. In terms of processing, acetylation of beta-endorphin occurs in a tissue-specific manner. In terms of tissue distribution, C-terminal peptide 1 and C-terminal peptide 2 are detected in the anterior part of the nucleus lateralis tuberis of hypothalamus, in dorsal hypothalamus, thalamus, telencephalon, optic tectum and medulla oblongata (at protein level). Expressed in pituitary and hypothalamus of adult diploid animals, and hypothalamus of triploid and ovulated female trout.

It is found in the secreted. Functionally, stimulates the adrenal glands to release cortisol. Its function is as follows. Melanocyte-stimulating hormone alpha: Anorexigenic peptide. Increases the pigmentation of skin by increasing melanin production in melanocytes. In terms of biological role, melanocyte-stimulating hormone beta: Increases the pigmentation of skin by increasing melanin production in melanocytes. Beta-endorphin: Endogenous orexigenic opiate. Functionally, endogenous opiate. The chain is Pro-opiomelanocortin A (pomca) from Oncorhynchus mykiss (Rainbow trout).